Here is a 372-residue protein sequence, read N- to C-terminus: MAPRKNSKTQQPTGDNRKKALDAALAMIEKDFGKGAVMRLGDENRPPISAISSGNTAIDVALGIGGFPRGRIVEVYGPESSGKTTVALHAIAQAQKAGGIAAFIDAEHALDPDYARKLGVDTDALLVSQPDTGEQALEIADMLVRSGAIDIIVIDSVAALTPKAEIEGEMGDSHVGLQARLMSQALRKMTGALYNSGTTAIFINQLREKIGVMFGSPETTTGGKALKFYASVRCDVRRIQTLKDGQDAIGNRTRLKVVKNKVSPPFKIAEFDIMYGEGISRESSIIDLGVDNGIIKKSGSWFTYEGDQLGQGKEKVRLYLKETPELADEIEDKIFRALHIGKYAALKDADDALTDDPVDMVPNVDFDDSDDD.

Residue 77-84 (GPESSGKT) coordinates ATP.

This sequence belongs to the RecA family.

The protein localises to the cytoplasm. In terms of biological role, can catalyze the hydrolysis of ATP in the presence of single-stranded DNA, the ATP-dependent uptake of single-stranded DNA by duplex DNA, and the ATP-dependent hybridization of homologous single-stranded DNAs. It interacts with LexA causing its activation and leading to its autocatalytic cleavage. This is Protein RecA from Corynebacterium diphtheriae (strain ATCC 700971 / NCTC 13129 / Biotype gravis).